The chain runs to 394 residues: S-adenosylmethionine synthase (394 aa).

His16 contributes to the ATP binding site. A Mg(2+)-binding site is contributed by Asp18. Glu44 lines the K(+) pocket. Positions 57 and 100 each coordinate L-methionine. Residues 100-110 are flexible loop; sequence QSPDIAQGVDA. ATP-binding positions include 172 to 174, 239 to 240, Asp248, 254 to 255, Ala271, and Lys275; these read DAK, RF, and RK. L-methionine is bound at residue Asp248. Position 279 (Lys279) interacts with L-methionine.

Belongs to the AdoMet synthase family. Homotetramer; dimer of dimers. Mg(2+) is required as a cofactor. The cofactor is K(+).

The protein resides in the cytoplasm. The catalysed reaction is L-methionine + ATP + H2O = S-adenosyl-L-methionine + phosphate + diphosphate. It functions in the pathway amino-acid biosynthesis; S-adenosyl-L-methionine biosynthesis; S-adenosyl-L-methionine from L-methionine: step 1/1. In terms of biological role, catalyzes the formation of S-adenosylmethionine (AdoMet) from methionine and ATP. The overall synthetic reaction is composed of two sequential steps, AdoMet formation and the subsequent tripolyphosphate hydrolysis which occurs prior to release of AdoMet from the enzyme. This is S-adenosylmethionine synthase from Enterococcus faecalis (strain ATCC 700802 / V583).